A 218-amino-acid polypeptide reads, in one-letter code: uncharacterized protein (218 aa).

The region spanning 4–207 (WKVAAAQYEP…SLLLVGQRSS (204 aa)) is the CN hydrolase domain.

This is an uncharacterized protein from Escherichia coli (strain K12).